The chain runs to 305 residues: Oxygen-dependent coproporphyrinogen-III oxidase (305 aa).

A substrate-binding site is contributed by Ser-98. A divalent metal cation-binding residues include His-102 and His-112. His-112 (proton donor) is an active-site residue. Residue 114 to 116 (NVR) coordinates substrate. Residues His-151 and His-181 each coordinate a divalent metal cation. The segment at 246 to 281 (YVEFNLVYDRGTLFGLQSGGRTESILMSMPPLARWE) is important for dimerization. 264–266 (GGR) serves as a coordination point for substrate.

The protein belongs to the aerobic coproporphyrinogen-III oxidase family. As to quaternary structure, homodimer. Requires a divalent metal cation as cofactor.

It is found in the cytoplasm. It carries out the reaction coproporphyrinogen III + O2 + 2 H(+) = protoporphyrinogen IX + 2 CO2 + 2 H2O. The protein operates within porphyrin-containing compound metabolism; protoporphyrin-IX biosynthesis; protoporphyrinogen-IX from coproporphyrinogen-III (O2 route): step 1/1. In terms of biological role, involved in the heme biosynthesis. Catalyzes the aerobic oxidative decarboxylation of propionate groups of rings A and B of coproporphyrinogen-III to yield the vinyl groups in protoporphyrinogen-IX. This chain is Oxygen-dependent coproporphyrinogen-III oxidase, found in Vibrio vulnificus (strain YJ016).